A 539-amino-acid polypeptide reads, in one-letter code: Netrin-G1 (539 aa).

An N-terminal signal peptide occupies residues 1–18; sequence MYLSRFLSIHALWVTVSS. 3 disulfides stabilise this stretch: C33/C50, C72/C92, and C80/C88. Residues 46 to 296 form the Laminin N-terminal domain; it reads DYTACQPEST…AISDIKVRGR (251 aa). Positions 80–91 are NGL discriminant loop I; that stretch reads CAMGNPYMCNNE. N133 is a glycosylation site (N-linked (GlcNAc...) asparagine). C182 and C206 form a disulfide bridge. Positions 208–214 are NGL discriminant loop II; that stretch reads EEYSTGY. Residues 273–275 form an NGL discriminant loop III region; that stretch reads EIF. Intrachain disulfides connect C297–C306, C299–C315, C317–C326, C329–C354, C364–C373, C366–C384, C387–C396, C399–C417, C420–C432, C422–C438, C440–C449, C452–C462, and C488–C497. Laminin EGF-like domains follow at residues 297-356, 364-419, and 420-469; these read CKCN…TCIP, CECF…VCIE, and CYCN…VCDN. N-linked (GlcNAc...) asparagine glycosylation is present at N320. N-linked (GlcNAc...) asparagine glycosylation occurs at N406. N433 carries N-linked (GlcNAc...) asparagine glycosylation. S510 carries GPI-anchor amidated serine lipidation. Residues 511–539 constitute a propeptide, removed in mature form; that stretch reads ESGQGAPPRGSPALLLLTMLLGTAGPLVF.

N-glycosylated. As to expression, expression is restricted primarily to neurons of the CNS, particularly in the dorsal thalamus, olfactory bulb and inferior colliculus. Isoform 1A and isoform 1D are the major products in adult brain.

It localises to the cell membrane. Functionally, involved in controlling patterning and neuronal circuit formation at the laminar, cellular, subcellular and synaptic levels. Promotes neurite outgrowth of both axons and dendrites. The chain is Netrin-G1 (Ntng1) from Mus musculus (Mouse).